The primary structure comprises 195 residues: Ethylene-responsive transcription factor ERF018 (195 aa).

Basic and acidic residues predominate over residues 1-13; sequence MVKQAMKEEEKKR. The disordered stretch occupies residues 1 to 22; the sequence is MVKQAMKEEEKKRNTAMQSKYK. A DNA-binding region (AP2/ERF) is located at residues 20-77; that stretch reads KYKGVRKRKWGKWVSEIRLPHSRERIWLGSYDTPEKAARAFDAAQFCLRGGDANFNFP.

This sequence belongs to the AP2/ERF transcription factor family. ERF subfamily.

It localises to the nucleus. Its function is as follows. Probably acts as a transcriptional activator. Binds to the GCC-box pathogenesis-related promoter element. May be involved in the regulation of gene expression by stress factors and by components of stress signal transduction pathways. This chain is Ethylene-responsive transcription factor ERF018 (ERF018), found in Arabidopsis thaliana (Mouse-ear cress).